The chain runs to 802 residues: uncharacterized protein (802 aa).

Residues 6–41 (SRSEKVKRIFQQFDGNLDGGLSREEMSALVVAVNPR) form the EF-hand 1 domain. 7 TPR repeats span residues 229 to 262 (FDGH…QPTD), 264 to 296 (RPHF…AESG), 305 to 338 (PQIY…CPTH), 339 to 372 (YRAL…KPDY), 373 to 406 (ADAH…KPGH), 407 to 440 (VDAL…WPNH), and 442 to 474 (RAQL…TNRV). An EF-hand 2 domain is found at 595–630 (AIKAINEKILSVLDDSGSGRVDLGMFYAVIAPLCGG).

This is an uncharacterized protein from Arabidopsis thaliana (Mouse-ear cress).